Here is a 64-residue protein sequence, read N- to C-terminus: DNA gyrase inhibitor YacG (64 aa).

Zn(2+)-binding residues include C9, C12, C28, and C32. The interval 45-64 (KRIPSAGDLSDSDDWSEQQP) is disordered. The segment covering 54-64 (SDSDDWSEQQP) has biased composition (acidic residues).

The protein belongs to the DNA gyrase inhibitor YacG family. Interacts with GyrB. Zn(2+) is required as a cofactor.

Its function is as follows. Inhibits all the catalytic activities of DNA gyrase by preventing its interaction with DNA. Acts by binding directly to the C-terminal domain of GyrB, which probably disrupts DNA binding by the gyrase. This chain is DNA gyrase inhibitor YacG, found in Klebsiella pneumoniae subsp. pneumoniae (strain ATCC 700721 / MGH 78578).